We begin with the raw amino-acid sequence, 425 residues long: Serine--tRNA ligase (425 aa).

An L-serine-binding site is contributed by 228 to 230 (TAE). 259–261 (RSE) contacts ATP. Glu282 provides a ligand contact to L-serine. 346 to 349 (EIAS) serves as a coordination point for ATP. Ser382 contacts L-serine.

This sequence belongs to the class-II aminoacyl-tRNA synthetase family. Type-1 seryl-tRNA synthetase subfamily. As to quaternary structure, homodimer. The tRNA molecule binds across the dimer.

It is found in the cytoplasm. It carries out the reaction tRNA(Ser) + L-serine + ATP = L-seryl-tRNA(Ser) + AMP + diphosphate + H(+). The enzyme catalyses tRNA(Sec) + L-serine + ATP = L-seryl-tRNA(Sec) + AMP + diphosphate + H(+). The protein operates within aminoacyl-tRNA biosynthesis; selenocysteinyl-tRNA(Sec) biosynthesis; L-seryl-tRNA(Sec) from L-serine and tRNA(Sec): step 1/1. Catalyzes the attachment of serine to tRNA(Ser). Is also able to aminoacylate tRNA(Sec) with serine, to form the misacylated tRNA L-seryl-tRNA(Sec), which will be further converted into selenocysteinyl-tRNA(Sec). This is Serine--tRNA ligase from Rickettsia felis (strain ATCC VR-1525 / URRWXCal2) (Rickettsia azadi).